Consider the following 337-residue polypeptide: tRNA N6-adenosine threonylcarbamoyltransferase (337 aa).

Residues H111 and H115 each contribute to the Fe cation site. Residues 134–138 (LVSGG), D167, G180, and N272 contribute to the substrate site. Fe cation is bound at residue D300.

This sequence belongs to the KAE1 / TsaD family. The cofactor is Fe(2+).

It is found in the cytoplasm. The enzyme catalyses L-threonylcarbamoyladenylate + adenosine(37) in tRNA = N(6)-L-threonylcarbamoyladenosine(37) in tRNA + AMP + H(+). Required for the formation of a threonylcarbamoyl group on adenosine at position 37 (t(6)A37) in tRNAs that read codons beginning with adenine. Is involved in the transfer of the threonylcarbamoyl moiety of threonylcarbamoyl-AMP (TC-AMP) to the N6 group of A37, together with TsaE and TsaB. TsaD likely plays a direct catalytic role in this reaction. This Citrobacter koseri (strain ATCC BAA-895 / CDC 4225-83 / SGSC4696) protein is tRNA N6-adenosine threonylcarbamoyltransferase.